A 214-amino-acid polypeptide reads, in one-letter code: Pyridoxine/pyridoxamine 5'-phosphate oxidase (214 aa).

Substrate is bound by residues 8–11 (RINY) and lysine 66. FMN contacts are provided by residues 61–66 (RILLIK), 76–77 (FT), arginine 82, lysine 83, and glutamine 105. Substrate-binding residues include tyrosine 123, arginine 127, and serine 131. Residues 140–141 (QS) and tryptophan 184 contribute to the FMN site. 190 to 192 (RLH) contributes to the substrate binding site. Residue arginine 194 coordinates FMN.

This sequence belongs to the pyridoxamine 5'-phosphate oxidase family. As to quaternary structure, homodimer. Requires FMN as cofactor.

It catalyses the reaction pyridoxamine 5'-phosphate + O2 + H2O = pyridoxal 5'-phosphate + H2O2 + NH4(+). The catalysed reaction is pyridoxine 5'-phosphate + O2 = pyridoxal 5'-phosphate + H2O2. The protein operates within cofactor metabolism; pyridoxal 5'-phosphate salvage; pyridoxal 5'-phosphate from pyridoxamine 5'-phosphate: step 1/1. It participates in cofactor metabolism; pyridoxal 5'-phosphate salvage; pyridoxal 5'-phosphate from pyridoxine 5'-phosphate: step 1/1. Its function is as follows. Catalyzes the oxidation of either pyridoxine 5'-phosphate (PNP) or pyridoxamine 5'-phosphate (PMP) into pyridoxal 5'-phosphate (PLP). This Burkholderia vietnamiensis (strain G4 / LMG 22486) (Burkholderia cepacia (strain R1808)) protein is Pyridoxine/pyridoxamine 5'-phosphate oxidase.